The primary structure comprises 79 residues: MGGISIWQLLIVALIVVLLFGTKKLRSLGGDLGGAVKGFKNAMSSEEDKKALEDTEAAKTAQTTQQATEKKPESNKEQA.

Residues 1–21 form a helical membrane-spanning segment; that stretch reads MGGISIWQLLIVALIVVLLFG. Positions 43–79 are disordered; it reads MSSEEDKKALEDTEAAKTAQTTQQATEKKPESNKEQA. Residues 46 to 57 show a composition bias toward basic and acidic residues; sequence EEDKKALEDTEA. Positions 58–67 are enriched in low complexity; that stretch reads AKTAQTTQQA. A compositionally biased stretch (basic and acidic residues) spans 68-79; that stretch reads TEKKPESNKEQA.

This sequence belongs to the TatA/E family. As to quaternary structure, the Tat system comprises two distinct complexes: a TatABC complex, containing multiple copies of TatA, TatB and TatC subunits, and a separate TatA complex, containing only TatA subunits. Substrates initially bind to the TatABC complex, which probably triggers association of the separate TatA complex to form the active translocon.

Its subcellular location is the cell inner membrane. Part of the twin-arginine translocation (Tat) system that transports large folded proteins containing a characteristic twin-arginine motif in their signal peptide across membranes. TatA could form the protein-conducting channel of the Tat system. The chain is Sec-independent protein translocase protein TatA from Shewanella baltica (strain OS223).